The primary structure comprises 336 residues: Ribose-phosphate pyrophosphokinase 1 (336 aa).

Mg(2+) contacts are provided by D150, H152, D161, and D165. The segment at 236-251 is binding of phosphoribosylpyrophosphate; sequence GKVAVMVDDMIDTAGT.

The protein belongs to the ribose-phosphate pyrophosphokinase family.

It carries out the reaction D-ribose 5-phosphate + ATP = 5-phospho-alpha-D-ribose 1-diphosphate + AMP + H(+). This Spinacia oleracea (Spinach) protein is Ribose-phosphate pyrophosphokinase 1 (PRS1).